Here is a 202-residue protein sequence, read N- to C-terminus: Snake venom metalloproteinase leucurolysin-A (202 aa).

At Q1 the chain carries Pyrrolidone carboxylic acid. One can recognise a Peptidase M12B domain in the interval 6–202 (RYIELVVVAD…HNPQCILNKP (197 aa)). Ca(2+) contacts are provided by E9 and D93. 3 disulfide bridges follow: C117–C197, C157–C181, and C159–C164. H142 is a binding site for Zn(2+). Residue E143 is part of the active site. Residues H146 and H152 each coordinate Zn(2+). The Ca(2+) site is built by C197 and N200.

This sequence belongs to the venom metalloproteinase (M12B) family. P-I subfamily. As to quaternary structure, monomer. It depends on Zn(2+) as a cofactor. As to expression, expressed by the venom gland.

It localises to the secreted. Its activity is regulated as follows. Inhibited by EDTA and 2-mercaptoethanol. Inhibited by 1 mM zinc ion and to a lesser extent by 1 mM calcium ion. Functionally, non-hemorrhagic metalloproteinase that hydrolyzes the alpha chains of fibrinogen, as well as fibrin, fibronectin and casein. Beta and gamma chains are also hydrolyzed, but more slowly. Thrombolytic activity is also observed. Induces detachment of endothelial cells followed by death, and inhibits endothelial cell adhesion to fibronectin. Induces edema in mouse paw. Inhibits ADP-induced platelet aggregation on human platelet-rich plasma with an IC(50) of 2.8 uM. The chain is Snake venom metalloproteinase leucurolysin-A from Bothrops leucurus (Whitetail lancehead).